We begin with the raw amino-acid sequence, 85 residues long: Large ribosomal subunit protein bL27 (85 aa).

Belongs to the bacterial ribosomal protein bL27 family.

The sequence is that of Large ribosomal subunit protein bL27 from Solibacter usitatus (strain Ellin6076).